The following is a 257-amino-acid chain: tRNA (guanine-N(1)-)-methyltransferase (257 aa).

Residues glycine 113 and 133–138 (IGDYVL) contribute to the S-adenosyl-L-methionine site.

It belongs to the RNA methyltransferase TrmD family. In terms of assembly, homodimer.

Its subcellular location is the cytoplasm. The enzyme catalyses guanosine(37) in tRNA + S-adenosyl-L-methionine = N(1)-methylguanosine(37) in tRNA + S-adenosyl-L-homocysteine + H(+). Specifically methylates guanosine-37 in various tRNAs. This chain is tRNA (guanine-N(1)-)-methyltransferase, found in Cronobacter sakazakii (strain ATCC BAA-894) (Enterobacter sakazakii).